A 563-amino-acid chain; its full sequence is MASTIQALPQEVVYLITAGEVIDSFAAVVRELVENSLDAGANRIVVYLWPQQWRVRVADNGCGMNLDDLQQAASAHSTSKIRSSADLWKIHSLGFRGEALHSLTTLADVEIISRAPENVGWRVVYGDNGEATQVEATAIAPGTVVTVSNLFASCAARRQGLPTTAQQMKAVQATIQQIALCHPQTTWQVWQNDRIWFTISPAATAGQLIPQFLPQLRPGDLQEIKLEIPNPENPQLSTNNKANATTLSLVVGLPDRCHRHRPDWVRVAINGRMIKSPELEQTILAAFHRTLPRDRYPLCFLHLLISPDQINWNRNPAKTEIYLHDLSYWQEQVTQAINQTLRISAANIKESVQTTRVSQLLKAAEEKGNYNFNPQNANPADNTQHYLKAVAQVSNTYIVAEHSGGMWLVEQHIAHERVLYEQLCDNWRLIPVEPPIILYQLSPAQVAQLQRIGLDIDIFGEQLWAVRNLPAMLQQREDCAEAILELSWGGDLQTAQVAVACRSAIRNGTPMSLPEMQKLLDDWQRTRNPRTCPHGRPIYLSLDESSLSRFFRRHWVIGKSHGI.

The protein belongs to the DNA mismatch repair MutL/HexB family.

Functionally, this protein is involved in the repair of mismatches in DNA. It is required for dam-dependent methyl-directed DNA mismatch repair. May act as a 'molecular matchmaker', a protein that promotes the formation of a stable complex between two or more DNA-binding proteins in an ATP-dependent manner without itself being part of a final effector complex. In Trichormus variabilis (strain ATCC 29413 / PCC 7937) (Anabaena variabilis), this protein is DNA mismatch repair protein MutL.